Consider the following 517-residue polypeptide: UDP-N-acetylmuramyl-tripeptide synthetase (517 aa).

Thr48 is a binding site for UDP-N-acetyl-alpha-D-muramoyl-L-alanyl-D-glutamate. 125–131 (GTKGKTT) serves as a coordination point for ATP. Residues 169-170 (TT), Ser196, and Arg204 each bind UDP-N-acetyl-alpha-D-muramoyl-L-alanyl-D-glutamate. Position 238 is an N6-carboxylysine (Lys238).

Belongs to the MurCDEF family. MurE subfamily. In terms of processing, carboxylation is probably crucial for Mg(2+) binding and, consequently, for the gamma-phosphate positioning of ATP.

It is found in the cytoplasm. Its pathway is cell wall biogenesis; peptidoglycan biosynthesis. Its function is as follows. Catalyzes the addition of an amino acid to the nucleotide precursor UDP-N-acetylmuramoyl-L-alanyl-D-glutamate (UMAG) in the biosynthesis of bacterial cell-wall peptidoglycan. This Bifidobacterium longum (strain NCC 2705) protein is UDP-N-acetylmuramyl-tripeptide synthetase.